Reading from the N-terminus, the 344-residue chain is NADH-ubiquinone oxidoreductase chain 2 (344 aa).

The next 11 membrane-spanning stretches (helical) occupy residues 1 to 21, 24 to 44, 59 to 79, 94 to 114, 121 to 141, 150 to 170, 177 to 197, 201 to 221, 245 to 265, 273 to 293, and 324 to 344; these read MNPL…TITL, FHWL…IPLM, YFLT…ISAW, MNIL…HFWI, ISLP…MALL, LNLT…GGIG, IMAF…KFDP, LLNF…LTTI, LILL…KLLI, NATL…FFYI, and TAIM…LLLL.

This sequence belongs to the complex I subunit 2 family.

The protein resides in the mitochondrion inner membrane. The catalysed reaction is a ubiquinone + NADH + 5 H(+)(in) = a ubiquinol + NAD(+) + 4 H(+)(out). Core subunit of the mitochondrial membrane respiratory chain NADH dehydrogenase (Complex I) that is believed to belong to the minimal assembly required for catalysis. Complex I functions in the transfer of electrons from NADH to the respiratory chain. The immediate electron acceptor for the enzyme is believed to be ubiquinone. This chain is NADH-ubiquinone oxidoreductase chain 2 (MT-ND2), found in Aquarana catesbeiana (American bullfrog).